The following is a 131-amino-acid chain: EG45-like domain containing protein (131 aa).

The N-terminal stretch at 1–24 (MGVGTKVLVITTMAICLISSAAYA) is a signal peptide. The Expansin-like EG45; incomplete domain occupies 27 to 131 (GTATFYTPPY…GKIKIEFNQA (105 aa)). Cys73 and Cys85 are disulfide-bonded.

As to expression, expressed in the outer layer of xylem and the vascular cambial zone of roots, in shoot cambium, but not in leaves.

It localises to the secreted. Functionally, might have a systemic role in water and solute homeostasis. Has no expansin-like activity. The protein is EG45-like domain containing protein (CjBAp12) of Citrus jambhiri (Rough lemon).